A 587-amino-acid polypeptide reads, in one-letter code: Succinate dehydrogenase flavoprotein subunit (587 aa).

FAD-binding positions include 15-20 (GAGGAG), 39-54 (SKVFPTRSHTVSAQGG), and Asp-223. Residue His-47 is modified to Tele-8alpha-FAD histidine. Positions 244 and 256 each coordinate substrate. Arg-288 (proton acceptor) is an active-site residue. His-355 is a substrate binding site. Glu-389 is a binding site for FAD. Arg-400 is a binding site for substrate. Position 405-406 (405-406 (SL)) interacts with FAD.

Belongs to the FAD-dependent oxidoreductase 2 family. FRD/SDH subfamily. In terms of assembly, part of an enzyme complex containing four subunits: a flavoprotein, an iron-sulfur protein, cytochrome b-556 and a hydrophobic protein. It depends on FAD as a cofactor.

It is found in the cell inner membrane. The catalysed reaction is a quinone + succinate = fumarate + a quinol. It functions in the pathway carbohydrate metabolism; tricarboxylic acid cycle; fumarate from succinate (bacterial route): step 1/1. The chain is Succinate dehydrogenase flavoprotein subunit (sdhA) from Coxiella burnetii (strain RSA 493 / Nine Mile phase I).